Consider the following 322-residue polypeptide: MIFSTLEHIFTHISFSIVSIVIIIHLITLLGNEIIKPYDSSEKGMIVTFLCLTGLLITRWIYSGHFPLSDLYESLIFLSWSFSLIHIVPYFKIRKNYLTEITASSTIFTQGFATSGLLTEIRKPTILVPALQSEWLIMHVSMMILSYAALLCGSLLSVALLVITFRKIFYSYKSNNFLKLNESFSFGEIQYKNERNNILKKNYFLSAKNYYKAQLIQQLDYWSYRVISLGFIFLTIGILSGAVWANEAWGSYWSWDPKETWAFITWIVFAIYLHIRTNKNFQGANSAIVATLGFLIIWICYFGVNLLGIGLHSYGSFTLTSS.

The next 7 helical transmembrane spans lie at 9-29 (IFTH…LITL), 44-64 (GMIV…IYSG), 71-91 (LYES…VPYF), 143-163 (MILS…LLVI), 226-246 (VISL…VWAN), 255-275 (WDPK…YLHI), and 287-307 (AIVA…VNLL).

Belongs to the CcmF/CycK/Ccl1/NrfE/CcsA family. As to quaternary structure, may interact with Ccs1.

Its subcellular location is the plastid. It is found in the chloroplast thylakoid membrane. Its function is as follows. Required during biogenesis of c-type cytochromes (cytochrome c6 and cytochrome f) at the step of heme attachment. In Lactuca sativa (Garden lettuce), this protein is Cytochrome c biogenesis protein CcsA.